The following is a 438-amino-acid chain: Rhomboid-related protein 1 (438 aa).

A disordered region spans residues 1–62 (MGRVEDGGTT…PSQPGPALWS (62 aa)). Residues 8–17 (GTTEELEDWD) show a composition bias toward acidic residues. The next 7 helical transmembrane spans lie at 196–216 (PPVF…CYGA), 262–282 (GFNA…HGLL), 284–304 (ISLL…ITDM), 308–328 (VVGG…NVVM), 340–359 (LRMV…AVWL), 372–392 (PSFM…LTIL), and 405–425 (WWVV…WNVF). S312 (nucleophile) is an active-site residue. The active site involves H377.

The protein belongs to the peptidase S54 family. As to expression, detected in heart, brain, skeletal muscle and kidney.

The protein resides in the membrane. It carries out the reaction Cleaves type-1 transmembrane domains using a catalytic dyad composed of serine and histidine that are contributed by different transmembrane domains.. Functionally, may be involved in regulated intramembrane proteolysis and the subsequent release of functional polypeptides from their membrane anchors. The sequence is that of Rhomboid-related protein 1 (RHBDL1) from Homo sapiens (Human).